A 373-amino-acid polypeptide reads, in one-letter code: Sterol 24-C-methyltransferase (373 aa).

The protein belongs to the class I-like SAM-binding methyltransferase superfamily. Erg6/SMT family.

It carries out the reaction zymosterol + S-adenosyl-L-methionine = fecosterol + S-adenosyl-L-homocysteine + H(+). It functions in the pathway steroid metabolism; ergosterol biosynthesis; ergosterol from zymosterol: step 1/5. Its function is as follows. Catalyzes the methyl transfer from S-adenosyl-methionine to the C-24 of zymosterol to form fecosterol. In Eremothecium gossypii (strain ATCC 10895 / CBS 109.51 / FGSC 9923 / NRRL Y-1056) (Yeast), this protein is Sterol 24-C-methyltransferase (ERG6).